Reading from the N-terminus, the 86-residue chain is Large ribosomal subunit protein bL27 (86 aa).

The span at 1–10 (MAQKKGGGST) shows a compositional bias: gly residues. The segment at 1–21 (MAQKKGGGSTRNGRDSESKRL) is disordered.

The protein belongs to the bacterial ribosomal protein bL27 family.

The polypeptide is Large ribosomal subunit protein bL27 (Bordetella petrii (strain ATCC BAA-461 / DSM 12804 / CCUG 43448)).